The sequence spans 247 residues: Putative cyclin-T1-1 (247 aa).

Belongs to the cyclin family. Cyclin T subfamily.

The sequence is that of Putative cyclin-T1-1 (CYCT1-1) from Arabidopsis thaliana (Mouse-ear cress).